A 383-amino-acid chain; its full sequence is S-adenosylmethionine synthase (383 aa).

Residue histidine 15 coordinates ATP. Residue aspartate 17 participates in Mg(2+) binding. Glutamate 43 serves as a coordination point for K(+). 2 residues coordinate L-methionine: glutamate 56 and glutamine 99. The interval 99 to 109 is flexible loop; that stretch reads QSPDINQGVDK. ATP-binding positions include 164 to 166, 230 to 231, aspartate 239, 245 to 246, alanine 262, and lysine 266; these read DAK, RF, and RK. Aspartate 239 serves as a coordination point for L-methionine. Lysine 270 contributes to the L-methionine binding site.

This sequence belongs to the AdoMet synthase family. As to quaternary structure, homotetramer; dimer of dimers. Mg(2+) serves as cofactor. Requires K(+) as cofactor.

Its subcellular location is the cytoplasm. It catalyses the reaction L-methionine + ATP + H2O = S-adenosyl-L-methionine + phosphate + diphosphate. Its pathway is amino-acid biosynthesis; S-adenosyl-L-methionine biosynthesis; S-adenosyl-L-methionine from L-methionine: step 1/1. Functionally, catalyzes the formation of S-adenosylmethionine (AdoMet) from methionine and ATP. The overall synthetic reaction is composed of two sequential steps, AdoMet formation and the subsequent tripolyphosphate hydrolysis which occurs prior to release of AdoMet from the enzyme. In Vibrio atlanticus (strain LGP32) (Vibrio splendidus (strain Mel32)), this protein is S-adenosylmethionine synthase.